The sequence spans 1060 residues: Positive regulator of purine utilization (1060 aa).

Over residues 1 to 15 (MLNPSTSDIHTSPTA) the composition is skewed to polar residues. Positions 1-48 (MLNPSTSDIHTSPTAVGNGRKRPHPIADSGSAMPSDPSAQQLPHPANE) are disordered. A DNA-binding region (zn(2)-C6 fungal-type) is located at residues 67-94 (CNRCRQRKNRCDQRLPRCQACEKAGVRC). Disordered regions lie at residues 163-207 (EIAA…DAED), 251-282 (SVPG…TTRD), 367-391 (AEDQ…SRQY), 811-862 (VQTS…RFDM), and 877-969 (RQGS…PSGM). Composition is skewed to basic and acidic residues over residues 170–182 (SNDK…KEKN), 189–207 (KASR…DAED), and 260–269 (GPSRPKERLP). The segment covering 272-282 (ATGTEGSTTRD) has biased composition (polar residues). The segment covering 367–377 (AEDQKEGRDHS) has biased composition (basic and acidic residues). Over residues 811 to 831 (VQTSTSGSRQFNATQSRSRPY) the composition is skewed to polar residues. 2 stretches are compositionally biased toward low complexity: residues 832–859 (SRQQ…PLPR) and 930–952 (PRYY…AASG).

Its subcellular location is the nucleus. Its function is as follows. Mediates the induction of a number of unlinked genes involved in purine utilization. Binds to the consensus sequence 5'-TCGGNNNNNNCCGA-3'. The chain is Positive regulator of purine utilization (uaY) from Emericella nidulans (strain FGSC A4 / ATCC 38163 / CBS 112.46 / NRRL 194 / M139) (Aspergillus nidulans).